A 301-amino-acid chain; its full sequence is ATP synthase F(0) complex subunit B1, mitochondrial (301 aa).

The transit peptide at 1–21 directs the protein to the mitochondrion; it reads MSLSRLSSPQTFSRVFIVARG.

The protein belongs to the eukaryotic ATPase B chain family. In terms of assembly, subunit of the F-type ATPase which has 2 components, CF(1) - the catalytic core - and CF(0) - the membrane proton channel.

The protein resides in the mitochondrion. Its subcellular location is the mitochondrion inner membrane. Functionally, mitochondrial membrane ATP synthase (F(1)F(0) ATP synthase or Complex V) produces ATP from ADP in the presence of a proton gradient across the membrane which is generated by electron transport complexes of the respiratory chain. F-type ATPases consist of two structural domains, F(1) - containing the extramembraneous catalytic core, and F(0) - containing the membrane proton channel, linked together by a central stalk and a peripheral stalk. During catalysis, ATP synthesis in the catalytic domain of F(1) is coupled via a rotary mechanism of the central stalk subunits to proton translocation. Part of the complex F(0) domain and the peripheric stalk, which acts as a stator to hold the subunits of the catalytic subcomplexes relative to the rotary elements. Plays a role in germline development. The chain is ATP synthase F(0) complex subunit B1, mitochondrial from Caenorhabditis elegans.